Here is a 332-residue protein sequence, read N- to C-terminus: Probable class II chitinase ARB_00204 (332 aa).

Residues 1-18 (MKTPFTILAALTVATTLA) form the signal peptide. The region spanning 19–331 (DVPDEWDIIE…NPHRKYLDSF (313 aa)) is the GH18 domain. Glutamate 118 serves as the catalytic Proton donor. Asparagine 245 carries an N-linked (GlcNAc...) asparagine glycan.

It belongs to the glycosyl hydrolase 18 family. Chitinase class II subfamily.

The protein localises to the secreted. It catalyses the reaction Random endo-hydrolysis of N-acetyl-beta-D-glucosaminide (1-&gt;4)-beta-linkages in chitin and chitodextrins.. Functionally, degrades chitin and chitotriose. This chain is Probable class II chitinase ARB_00204, found in Arthroderma benhamiae (strain ATCC MYA-4681 / CBS 112371) (Trichophyton mentagrophytes).